Reading from the N-terminus, the 502-residue chain is Protein DETOXIFICATION 49 (502 aa).

12 consecutive transmembrane segments (helical) span residues 41 to 61, 75 to 95, 123 to 143, 153 to 173, 190 to 210, 216 to 236, 267 to 287, 293 to 313, 338 to 358, 372 to 392, 414 to 434, and 439 to 459; these read LPLI…MLFL, LALG…SIGM, LLCS…LLFF, AEIF…LHPI, AFFA…SLGL, ALGA…YIVF, VSVC…GLLL, VASM…PSSL, RTGL…ALMV, IVKL…GNCP, LCCF…FSGF, and LWLG…VVLA.

Belongs to the multi antimicrobial extrusion (MATE) (TC 2.A.66.1) family.

The protein localises to the membrane. This chain is Protein DETOXIFICATION 49, found in Arabidopsis thaliana (Mouse-ear cress).